The sequence spans 561 residues: Cation diffusion facilitator family protein 1 (561 aa).

Residues 1–20 (MEVTMEDRSVKADKADRDDN) show a composition bias toward basic and acidic residues. Residues 1–26 (MEVTMEDRSVKADKADRDDNNTTSTE) form a disordered region. Topologically, residues 1-112 (MEVTMEDRSV…SESVKGVSRS (112 aa)) are cytoplasmic. The chain crosses the membrane as a helical span at residues 113-133 (LIIQIGMTVIFCALEFITGVV). Topologically, residues 134 to 136 (CSS) are extracellular. Residues 137 to 157 (IAMLADSYHMAADVMALIVAF) form a helical membrane-spanning segment. The Cytoplasmic segment spans residues 158–176 (TCIKIATRPSTRLGYGWVR). Residues 177–197 (AETLGGFFNGIFMCTVCVLVF) traverse the membrane as a helical segment. At 198–215 (QEAVGRIINVHMITHPLQ) the chain is on the extracellular side. The helical transmembrane segment at 216-236 (VLVIGFIGLLINLFGMFNLSG) threads the bilayer. Over 237–391 (HGHSHGGGSH…NVNIHGVWLH (155 aa)) the chain is Cytoplasmic. Residues 240-304 (SHGGGSHGHS…HTRLNGKFRS (65 aa)) are disordered. A 6 X 2 AA approximate repeats of H-G region spans residues 246–270 (HGHSHGGSHGHSHNNKKTKKNDGHG). Residues 247–264 (GHSHGGSHGHSHNNKKTK) show a composition bias toward basic residues. The chain crosses the membrane as a helical span at residues 392–412 (LLSDAFGSVIVMISAGFVYFL). At 413–420 (PTWKIAAY) the chain is on the extracellular side. The chain crosses the membrane as a helical span at residues 421 to 441 (LDPILSISLASIMGFTAVVLV). Over 442 to 561 (KTSGEKLLKQ…SVSTENEITE (120 aa)) the chain is Cytoplasmic.

Belongs to the cation diffusion facilitator (CDF) transporter (TC 2.A.4) family. SLC30A subfamily. In terms of assembly, interacts with lin-45 in a zinc-dependent manner. As to expression, expressed in intestinal cells. Expressed in the vulva.

It localises to the basolateral cell membrane. Functionally, involved in the regulation of Pn.p cell fate determination. Involved in zinc metabolism and the decrease of the cytosolic zinc concentration which is thought to modulate Ras signaling. Involved in zinc transport from the intestinal lumen to the pseudocoelum. The sequence is that of Cation diffusion facilitator family protein 1 (cdf-1) from Caenorhabditis elegans.